Here is a 269-residue protein sequence, read N- to C-terminus: 2-dehydro-3-deoxyphosphooctonate aldolase (269 aa).

It belongs to the KdsA family.

It is found in the cytoplasm. It carries out the reaction D-arabinose 5-phosphate + phosphoenolpyruvate + H2O = 3-deoxy-alpha-D-manno-2-octulosonate-8-phosphate + phosphate. It participates in carbohydrate biosynthesis; 3-deoxy-D-manno-octulosonate biosynthesis; 3-deoxy-D-manno-octulosonate from D-ribulose 5-phosphate: step 2/3. It functions in the pathway bacterial outer membrane biogenesis; lipopolysaccharide biosynthesis. The polypeptide is 2-dehydro-3-deoxyphosphooctonate aldolase (Chlamydia trachomatis serovar L2 (strain ATCC VR-902B / DSM 19102 / 434/Bu)).